Reading from the N-terminus, the 492-residue chain is Replication factor C large subunit (492 aa).

46–53 (GPPGSGKT) is an ATP binding site. Positions 445–492 (VIPKRPKISDNQISEILTKDNNPKDDVKKASKKPESTSKKQATLDKFF) are disordered. Positions 461 to 482 (LTKDNNPKDDVKKASKKPESTS) are enriched in basic and acidic residues.

The protein belongs to the activator 1 small subunits family. RfcL subfamily. Heteromultimer composed of small subunits (RfcS) and large subunits (RfcL).

Functionally, part of the RFC clamp loader complex which loads the PCNA sliding clamp onto DNA. This chain is Replication factor C large subunit, found in Methanococcus vannielii (strain ATCC 35089 / DSM 1224 / JCM 13029 / OCM 148 / SB).